A 252-amino-acid chain; its full sequence is Centromere protein V (252 aa).

The interval 1-80 is disordered; it reads MRRTRSAVAT…EEPPPAVTPA (80 aa). Ser18 carries the post-translational modification Phosphoserine. Arg39 is subject to Omega-N-methylarginine. Residues 54–64 are compositionally biased toward pro residues; it reads SAKPRPKPPPR. At Thr78 the chain carries Phosphothreonine. The region spanning 125 to 237 is the CENP-V/GFA domain; sequence HTGGCHCGAV…TEEFNGSDWE (113 aa). Residues Cys129, Cys131, Cys149, Cys151, Cys154, Cys193, and Cys196 each coordinate Zn(2+). Phosphoserine is present on Ser234.

The protein belongs to the Gfa family. Requires Zn(2+) as cofactor.

It localises to the chromosome. The protein resides in the centromere. Its subcellular location is the kinetochore. The protein localises to the nucleus. It is found in the cytoplasm. It localises to the cytoskeleton. The protein resides in the spindle. Functionally, required for distribution of pericentromeric heterochromatin in interphase nuclei and for centromere formation and organization, chromosome alignment and cytokinesis. The polypeptide is Centromere protein V (Cenpv) (Mus musculus (Mouse)).